The following is a 202-amino-acid chain: CASP-like protein 2U7 (202 aa).

Residues Met1 to Ala10 lie on the Cytoplasmic side of the membrane. Residues Leu11–Leu31 traverse the membrane as a helical segment. The Extracellular segment spans residues Asn32–Lys64. The helical transmembrane segment at Phe65–Met85 threads the bilayer. Topologically, residues Ala86–Met101 are cytoplasmic. Residues Ala102–Val122 traverse the membrane as a helical segment. The Extracellular portion of the chain corresponds to Ser123 to Cys148. Residues Leu149 to Ala169 traverse the membrane as a helical segment. The Cytoplasmic segment spans residues Ser170–Pro202.

This sequence belongs to the Casparian strip membrane proteins (CASP) family. As to quaternary structure, homodimer and heterodimers.

It is found in the cell membrane. The protein is CASP-like protein 2U7 of Selaginella moellendorffii (Spikemoss).